Here is a 443-residue protein sequence, read N- to C-terminus: NADH-quinone oxidoreductase subunit D 1 (443 aa).

It belongs to the complex I 49 kDa subunit family. NDH-1 is composed of 14 different subunits. Subunits NuoB, C, D, E, F, and G constitute the peripheral sector of the complex.

It is found in the cell membrane. The enzyme catalyses a quinone + NADH + 5 H(+)(in) = a quinol + NAD(+) + 4 H(+)(out). In terms of biological role, NDH-1 shuttles electrons from NADH, via FMN and iron-sulfur (Fe-S) centers, to quinones in the respiratory chain. The immediate electron acceptor for the enzyme in this species is believed to be a menaquinone. Couples the redox reaction to proton translocation (for every two electrons transferred, four hydrogen ions are translocated across the cytoplasmic membrane), and thus conserves the redox energy in a proton gradient. This is NADH-quinone oxidoreductase subunit D 1 from Streptomyces avermitilis (strain ATCC 31267 / DSM 46492 / JCM 5070 / NBRC 14893 / NCIMB 12804 / NRRL 8165 / MA-4680).